Consider the following 445-residue polypeptide: Argininosuccinate synthase (445 aa).

Residues 17–25 (AFSGGLDTS) and Ala43 contribute to the ATP site. Tyr99 lines the L-citrulline pocket. ATP is bound by residues Gly129 and Thr131. L-aspartate contacts are provided by Thr131, Asn135, and Asp136. An L-citrulline-binding site is contributed by Asn135. Residue Asp136 coordinates ATP. The L-citrulline site is built by Arg139 and Ser192. Asp194 contributes to the ATP binding site. L-citrulline-binding residues include Thr201, Glu203, and Glu280.

It belongs to the argininosuccinate synthase family. Type 2 subfamily. As to quaternary structure, homotetramer.

It is found in the cytoplasm. It catalyses the reaction L-citrulline + L-aspartate + ATP = 2-(N(omega)-L-arginino)succinate + AMP + diphosphate + H(+). It functions in the pathway amino-acid biosynthesis; L-arginine biosynthesis; L-arginine from L-ornithine and carbamoyl phosphate: step 2/3. This Bordetella pertussis (strain Tohama I / ATCC BAA-589 / NCTC 13251) protein is Argininosuccinate synthase.